The sequence spans 323 residues: NADH-cytochrome b5 reductase 2 (323 aa).

Residues 30-46 (LAPIYTAVGLTGLSVGL) form a helical membrane-spanning segment. One can recognise an FAD-binding FR-type domain in the interval 72–177 (QGWVDLKLSE…KGPLPKYQWE (106 aa)). Position 180 to 215 (180 to 215 (KHEHIALIAGGTGITPMYQLIRQIFKNPDDKTKVTL)) interacts with FAD.

It belongs to the flavoprotein pyridine nucleotide cytochrome reductase family. The cofactor is FAD.

The protein localises to the mitochondrion outer membrane. The enzyme catalyses 2 Fe(III)-[cytochrome b5] + NADH = 2 Fe(II)-[cytochrome b5] + NAD(+) + H(+). Its function is as follows. May mediate the reduction of outer membrane cytochrome b5. The protein is NADH-cytochrome b5 reductase 2 (mcr1) of Aspergillus oryzae (strain ATCC 42149 / RIB 40) (Yellow koji mold).